The chain runs to 1856 residues: Protein TANC1 (1856 aa).

The residue at position 1 (Met-1) is an N-acetylmethionine. Disordered regions lie at residues 1-45 (MLKA…LSTT), 58-130 (SMSL…SCSP), 203-222 (KSPC…KDSG), 262-296 (RADN…PVPY), and 437-489 (IASS…RPRE). Over residues 8 to 21 (KSREGGKGSKKEAG) the composition is skewed to basic and acidic residues. Positions 29–45 (PALSSSGDSPVNSLSTT) are enriched in polar residues. Phosphoserine occurs at positions 60, 63, 64, 204, 267, and 462. The span at 60 to 77 (SLPSSPLLPRQSLLTQSR) shows a compositional bias: low complexity. Polar residues predominate over residues 203–216 (KSPCETISSPSSTL). Residues 439–475 (SSSPSLSPKSSDPTQDLPGTPLLSPSSSTSALSVTRT) show a composition bias toward low complexity. ANK repeat units follow at residues 893 to 925 (EGLS…NVNY), 931 to 960 (NNAP…CLDG), 964 to 993 (NGMN…RVDH), 997 to 1026 (KGQC…SAGP), 1037 to 1066 (ALQQ…EHEI), 1075 to 1104 (WGET…AVSR), 1108 to 1137 (RGVP…DVNL), 1141 to 1170 (QGRT…ALSS), 1174 to 1203 (EGLS…EIDQ), 1207 to 1236 (NGRT…VIEH), and 1240 to 1269 (SGMR…KLGN). 3 TPR repeats span residues 1286–1319 (LQKL…FPRE), 1333–1366 (VSLY…KPKS), and 1368–1400 (EAFY…CPNN). The segment covering 1417-1426 (LQRNQQQKQQ) has biased composition (low complexity). Disordered regions lie at residues 1417–1597 (LQRN…FGDR), 1636–1720 (DMAP…NTPF), and 1832–1856 (HVST…ESNV). A phosphoserine mark is found at Ser-1436 and Ser-1463. Positions 1454–1463 (EEAEEEDTSS) are enriched in acidic residues. Composition is skewed to polar residues over residues 1490-1505 (EGLQ…QSRA) and 1524-1556 (PTKQ…VSSQ). Low complexity predominate over residues 1656–1686 (SLSSSGSSGSPSSSIKMSSSTSSLTSSSSVS). Residues Ser-1665, Ser-1673, and Ser-1674 each carry the phosphoserine modification.

It belongs to the TANC family. Interacts probably directly with DLG1, DLG4, HOMER1. Interacts with DLGAP1, INA, CAMK2A, GRIN2B and GRIA1. Interacts with TNIK and MINK1. In terms of processing, phosphorylated; by MINK1 and TNIK upon stimulation by RAP2A.

Its subcellular location is the postsynaptic density. Its function is as follows. May be a scaffold component in the postsynaptic density. This chain is Protein TANC1 (Tanc1), found in Mus musculus (Mouse).